A 176-amino-acid polypeptide reads, in one-letter code: NAD(P)H-quinone oxidoreductase subunit 6, chloroplastic (176 aa).

5 consecutive transmembrane segments (helical) span residues 10–30 (ILLV…VLLT), 32–52 (PIYS…FHIP), 61–81 (AQLL…VMFM), 92–112 (LWTV…FSLI), and 152–172 (FYLP…GAIS).

Belongs to the complex I subunit 6 family. NDH is composed of at least 16 different subunits, 5 of which are encoded in the nucleus.

It localises to the plastid. It is found in the chloroplast thylakoid membrane. The enzyme catalyses a plastoquinone + NADH + (n+1) H(+)(in) = a plastoquinol + NAD(+) + n H(+)(out). The catalysed reaction is a plastoquinone + NADPH + (n+1) H(+)(in) = a plastoquinol + NADP(+) + n H(+)(out). Functionally, NDH shuttles electrons from NAD(P)H:plastoquinone, via FMN and iron-sulfur (Fe-S) centers, to quinones in the photosynthetic chain and possibly in a chloroplast respiratory chain. The immediate electron acceptor for the enzyme in this species is believed to be plastoquinone. Couples the redox reaction to proton translocation, and thus conserves the redox energy in a proton gradient. This chain is NAD(P)H-quinone oxidoreductase subunit 6, chloroplastic (ndhG), found in Liriodendron tulipifera (Tuliptree).